A 220-amino-acid chain; its full sequence is Pyridoxine/pyridoxamine 5'-phosphate oxidase (220 aa).

FMN is bound by residues 69–74, 84–85, R90, K91, and Q113; these read RVVLLK and YT. Substrate is bound at residue K74. The substrate site is built by Y131, R135, and S139. Residues 148–149 and W193 each bind FMN; that span reads QS. 199–201 is a binding site for substrate; sequence RLH. Residue R203 coordinates FMN.

The protein belongs to the pyridoxamine 5'-phosphate oxidase family. As to quaternary structure, homodimer. The cofactor is FMN.

It catalyses the reaction pyridoxamine 5'-phosphate + O2 + H2O = pyridoxal 5'-phosphate + H2O2 + NH4(+). It carries out the reaction pyridoxine 5'-phosphate + O2 = pyridoxal 5'-phosphate + H2O2. Its pathway is cofactor metabolism; pyridoxal 5'-phosphate salvage; pyridoxal 5'-phosphate from pyridoxamine 5'-phosphate: step 1/1. It participates in cofactor metabolism; pyridoxal 5'-phosphate salvage; pyridoxal 5'-phosphate from pyridoxine 5'-phosphate: step 1/1. Functionally, catalyzes the oxidation of either pyridoxine 5'-phosphate (PNP) or pyridoxamine 5'-phosphate (PMP) into pyridoxal 5'-phosphate (PLP). The protein is Pyridoxine/pyridoxamine 5'-phosphate oxidase of Myxococcus xanthus.